A 354-amino-acid polypeptide reads, in one-letter code: UDP-glucose 4-epimerase GEPI42 (354 aa).

11 to 42 (TILVTGGAGFIGSHTVVQLLKQGFHVSIIDNL) is an NAD(+) binding site. Residue Ser137 coordinates substrate. Tyr161 functions as the Proton acceptor in the catalytic mechanism.

The protein belongs to the NAD(P)-dependent epimerase/dehydratase family. NAD(+) serves as cofactor.

It carries out the reaction UDP-alpha-D-glucose = UDP-alpha-D-galactose. It participates in carbohydrate metabolism; galactose metabolism. This Cyamopsis tetragonoloba (Guar) protein is UDP-glucose 4-epimerase GEPI42.